Consider the following 235-residue polypeptide: Small ribosomal subunit protein eS6 (235 aa).

Phosphoserine occurs at positions 229 and 230.

The protein belongs to the eukaryotic ribosomal protein eS6 family. Phosphorylated.

This Kluyveromyces marxianus (Yeast) protein is Small ribosomal subunit protein eS6 (RPS6).